Reading from the N-terminus, the 196-residue chain is NADH-quinone oxidoreductase subunit I (196 aa).

4Fe-4S ferredoxin-type domains are found at residues 54–84 and 104–133; these read LNRW…VEGA and RVYQ…MTNE. [4Fe-4S] cluster-binding residues include Cys64, Cys67, Cys70, Cys74, Cys113, Cys116, Cys119, and Cys123.

This sequence belongs to the complex I 23 kDa subunit family. As to quaternary structure, NDH-1 is composed of 14 different subunits. Subunits NuoA, H, J, K, L, M, N constitute the membrane sector of the complex. [4Fe-4S] cluster serves as cofactor.

It localises to the cell membrane. It carries out the reaction a quinone + NADH + 5 H(+)(in) = a quinol + NAD(+) + 4 H(+)(out). In terms of biological role, NDH-1 shuttles electrons from NADH, via FMN and iron-sulfur (Fe-S) centers, to quinones in the respiratory chain. The immediate electron acceptor for the enzyme in this species is believed to be ubiquinone. Couples the redox reaction to proton translocation (for every two electrons transferred, four hydrogen ions are translocated across the cytoplasmic membrane), and thus conserves the redox energy in a proton gradient. This chain is NADH-quinone oxidoreductase subunit I, found in Nocardioides sp. (strain ATCC BAA-499 / JS614).